Reading from the N-terminus, the 469-residue chain is 3-isopropylmalate dehydratase large subunit (469 aa).

[4Fe-4S] cluster contacts are provided by Cys347, Cys407, and Cys410.

Belongs to the aconitase/IPM isomerase family. LeuC type 1 subfamily. As to quaternary structure, heterodimer of LeuC and LeuD. [4Fe-4S] cluster is required as a cofactor.

It catalyses the reaction (2R,3S)-3-isopropylmalate = (2S)-2-isopropylmalate. It participates in amino-acid biosynthesis; L-leucine biosynthesis; L-leucine from 3-methyl-2-oxobutanoate: step 2/4. Its function is as follows. Catalyzes the isomerization between 2-isopropylmalate and 3-isopropylmalate, via the formation of 2-isopropylmaleate. This chain is 3-isopropylmalate dehydratase large subunit, found in Synechococcus sp. (strain RCC307).